The following is a 97-amino-acid chain: Sec-independent protein translocase protein TatA (97 aa).

The chain crosses the membrane as a helical span at residues 1–21 (MGFNIWSLLIILLIVALLFGT). Residues 28-97 (GGDLGGAIRG…SAEHHDRSTS (70 aa)) form a disordered region. Basic and acidic residues predominate over residues 37–56 (GFKESMREGEEEEAQKRADG). The span at 78-87 (QARESSSARQ) shows a compositional bias: low complexity. A compositionally biased stretch (basic and acidic residues) spans 88–97 (SAEHHDRSTS).

This sequence belongs to the TatA/E family. The Tat system comprises two distinct complexes: a TatABC complex, containing multiple copies of TatA, TatB and TatC subunits, and a separate TatA complex, containing only TatA subunits. Substrates initially bind to the TatABC complex, which probably triggers association of the separate TatA complex to form the active translocon.

The protein resides in the cell inner membrane. Its function is as follows. Part of the twin-arginine translocation (Tat) system that transports large folded proteins containing a characteristic twin-arginine motif in their signal peptide across membranes. TatA could form the protein-conducting channel of the Tat system. In Halorhodospira halophila (strain DSM 244 / SL1) (Ectothiorhodospira halophila (strain DSM 244 / SL1)), this protein is Sec-independent protein translocase protein TatA.